The following is a 443-amino-acid chain: Histidinol dehydrogenase (443 aa).

Y133, Q191, and N214 together coordinate NAD(+). Residues S240, Q262, and H265 each coordinate substrate. Q262 and H265 together coordinate Zn(2+). Catalysis depends on proton acceptor residues E329 and H330. Substrate contacts are provided by H330, D363, E417, and H422. Residue D363 coordinates Zn(2+). H422 lines the Zn(2+) pocket.

This sequence belongs to the histidinol dehydrogenase family. In terms of assembly, homodimer. The cofactor is Zn(2+).

The catalysed reaction is L-histidinol + 2 NAD(+) + H2O = L-histidine + 2 NADH + 3 H(+). It participates in amino-acid biosynthesis; L-histidine biosynthesis; L-histidine from 5-phospho-alpha-D-ribose 1-diphosphate: step 9/9. Its function is as follows. Catalyzes the sequential NAD-dependent oxidations of L-histidinol to L-histidinaldehyde and then to L-histidine. In Blochmanniella pennsylvanica (strain BPEN), this protein is Histidinol dehydrogenase.